A 234-amino-acid polypeptide reads, in one-letter code: Ubiquinone biosynthesis O-methyltransferase (234 aa).

Residues Arg-40, Gly-59, Asp-80, and Met-123 each contribute to the S-adenosyl-L-methionine site.

This sequence belongs to the methyltransferase superfamily. UbiG/COQ3 family.

The enzyme catalyses a 3-demethylubiquinol + S-adenosyl-L-methionine = a ubiquinol + S-adenosyl-L-homocysteine + H(+). It catalyses the reaction a 3-(all-trans-polyprenyl)benzene-1,2-diol + S-adenosyl-L-methionine = a 2-methoxy-6-(all-trans-polyprenyl)phenol + S-adenosyl-L-homocysteine + H(+). It functions in the pathway cofactor biosynthesis; ubiquinone biosynthesis. O-methyltransferase that catalyzes the 2 O-methylation steps in the ubiquinone biosynthetic pathway. The polypeptide is Ubiquinone biosynthesis O-methyltransferase (Coxiella burnetii (strain Dugway 5J108-111)).